The following is a 258-amino-acid chain: MSATAPFKTLSAKAAFQLDQELMSTGEFSIDQLMELAGLAVAKTIYKEYPPNETTTTTKNKFNPNKVLVLVGPGNNGGDGLVAARHLKLWNYDPIIYYPKRPASNQLYSRLIKQLQDLNVPELTTLTEVKHLLDSRDSKIKIIIDSIFGFSFKPPIREPFKDLINYLGQNHDHLPPIVSVDIPSGWDVDEGPGTEIDIQASCLISLTAPKPCAKLFVNSGPDKIHYLGGRFINPRIAKEYGIEDIVNKYQGDELIVKL.

Residues 15–244 (AFQLDQELMS…RIAKEYGIED (230 aa)) enclose the YjeF N-terminal domain. Position 75–79 (75–79 (NNGGD)) interacts with (6S)-NADPHX. K(+) contacts are provided by asparagine 76 and aspartate 145. (6S)-NADPHX is bound by residues 149-155 (GFSFKPP) and aspartate 181. Serine 184 is a binding site for K(+).

It belongs to the NnrE/AIBP family. The cofactor is K(+).

The protein localises to the cytoplasm. Its subcellular location is the mitochondrion. The enzyme catalyses (6R)-NADHX = (6S)-NADHX. It catalyses the reaction (6R)-NADPHX = (6S)-NADPHX. Its function is as follows. Catalyzes the epimerization of the S- and R-forms of NAD(P)HX, a damaged form of NAD(P)H that is a result of enzymatic or heat-dependent hydration. This is a prerequisite for the S-specific NAD(P)H-hydrate dehydratase to allow the repair of both epimers of NAD(P)HX. The chain is NAD(P)H-hydrate epimerase from Candida albicans (strain WO-1) (Yeast).